The chain runs to 457 residues: Cysteine--tRNA ligase (457 aa).

C28 is a Zn(2+) binding site. Residues 30–40 (MTVYDYCHLGH) carry the 'HIGH' region motif. The Zn(2+) site is built by C209, H234, and E238. Positions 266–270 (KMSKS) match the 'KMSKS' region motif. K269 contributes to the ATP binding site.

This sequence belongs to the class-I aminoacyl-tRNA synthetase family. As to quaternary structure, monomer. The cofactor is Zn(2+).

Its subcellular location is the cytoplasm. It catalyses the reaction tRNA(Cys) + L-cysteine + ATP = L-cysteinyl-tRNA(Cys) + AMP + diphosphate. This Laribacter hongkongensis (strain HLHK9) protein is Cysteine--tRNA ligase.